Reading from the N-terminus, the 710-residue chain is uncharacterized protein (710 aa).

The segment at 1-20 (MKQRQARLIGTPSQTRRQQE) is disordered. Positions 13–42 (SQTRRQQELAEKLEKVKEVLEDEKKRQFNE) form a coiled coil.

This sequence belongs to the IIV-6 268L family.

This is an uncharacterized protein from Invertebrate iridescent virus 6 (IIV-6).